We begin with the raw amino-acid sequence, 304 residues long: UTP--glucose-1-phosphate uridylyltransferase 1 (304 aa).

This sequence belongs to the UDPGP type 2 family.

The catalysed reaction is alpha-D-glucose 1-phosphate + UTP + H(+) = UDP-alpha-D-glucose + diphosphate. The protein operates within carbohydrate metabolism; nucleotide-sugar metabolism. The sequence is that of UTP--glucose-1-phosphate uridylyltransferase 1 (hasC1) from Streptococcus pyogenes serotype M18 (strain MGAS8232).